The primary structure comprises 299 residues: ATP phosphoribosyltransferase (299 aa).

Belongs to the ATP phosphoribosyltransferase family. Long subfamily. Requires Mg(2+) as cofactor.

The protein resides in the cytoplasm. The catalysed reaction is 1-(5-phospho-beta-D-ribosyl)-ATP + diphosphate = 5-phospho-alpha-D-ribose 1-diphosphate + ATP. It functions in the pathway amino-acid biosynthesis; L-histidine biosynthesis; L-histidine from 5-phospho-alpha-D-ribose 1-diphosphate: step 1/9. Its activity is regulated as follows. Feedback inhibited by histidine. Functionally, catalyzes the condensation of ATP and 5-phosphoribose 1-diphosphate to form N'-(5'-phosphoribosyl)-ATP (PR-ATP). Has a crucial role in the pathway because the rate of histidine biosynthesis seems to be controlled primarily by regulation of HisG enzymatic activity. The chain is ATP phosphoribosyltransferase from Baumannia cicadellinicola subsp. Homalodisca coagulata.